The following is a 189-amino-acid chain: MGLADFKDVDRNELSMIEVAHAILEDRGERMAFADIVNEVQKYLNKSDEEIRQRLPQFYTDMNTDGRFISMGENVWALRTWFKFEAVDEEVDHPEDDGDEESTRKHHKKVNTFLATTEGDDVIDYENDDPEDEDLSDDSDADEDDADDNSGDDYDDNEDDDDDDSLLDGIEDQLSQMDDDDLDDDEDEE.

One can recognise an HTH HARE-type domain in the interval 14–81; that stretch reads LSMIEVAHAI…GENVWALRTW (68 aa). 2 stretches are compositionally biased toward acidic residues: residues 90 to 100 and 118 to 189; these read EVDHPEDDGDE and EGDD…EDEE. A disordered region spans residues 90-189; sequence EVDHPEDDGD…DDLDDDEDEE (100 aa).

It belongs to the RpoE family. As to quaternary structure, RNAP is composed of a core of 2 alpha, a beta and a beta' subunits. The core is associated with a delta subunit and one of several sigma factors.

Functionally, participates in both the initiation and recycling phases of transcription. In the presence of the delta subunit, RNAP displays an increased specificity of transcription, a decreased affinity for nucleic acids, and an increased efficiency of RNA synthesis because of enhanced recycling. This is Probable DNA-directed RNA polymerase subunit delta from Lactobacillus delbrueckii subsp. bulgaricus (strain ATCC BAA-365 / Lb-18).